The following is a 286-amino-acid chain: 4-hydroxybenzoate octaprenyltransferase (286 aa).

7 helical membrane-spanning segments follow: residues 20-40 (IGIL…ADGM), 43-63 (PMIL…GCAI), 83-103 (LATG…LSLC), 135-155 (FFAM…PMAF), 160-180 (GTVP…VIAY), 209-229 (VAGI…AGIL), and 234-254 (IWFY…YTMI).

Belongs to the UbiA prenyltransferase family. Mg(2+) is required as a cofactor.

The protein localises to the cell inner membrane. It catalyses the reaction all-trans-octaprenyl diphosphate + 4-hydroxybenzoate = 4-hydroxy-3-(all-trans-octaprenyl)benzoate + diphosphate. It functions in the pathway cofactor biosynthesis; ubiquinone biosynthesis. Its function is as follows. Catalyzes the prenylation of para-hydroxybenzoate (PHB) with an all-trans polyprenyl group. Mediates the second step in the final reaction sequence of ubiquinone-8 (UQ-8) biosynthesis, which is the condensation of the polyisoprenoid side chain with PHB, generating the first membrane-bound Q intermediate 3-octaprenyl-4-hydroxybenzoate. This Nitrosomonas eutropha (strain DSM 101675 / C91 / Nm57) protein is 4-hydroxybenzoate octaprenyltransferase.